The following is a 56-amino-acid chain: Large ribosomal subunit protein bL33 (56 aa).

It belongs to the bacterial ribosomal protein bL33 family.

This chain is Large ribosomal subunit protein bL33, found in Haemophilus influenzae (strain 86-028NP).